Here is a 61-residue protein sequence, read N- to C-terminus: Small ribosomal subunit protein uS14 (61 aa).

Cys-24, Cys-27, Cys-40, and Cys-43 together coordinate Zn(2+).

The protein belongs to the universal ribosomal protein uS14 family. Zinc-binding uS14 subfamily. Part of the 30S ribosomal subunit. Contacts proteins S3 and S10. The cofactor is Zn(2+).

Its function is as follows. Binds 16S rRNA, required for the assembly of 30S particles and may also be responsible for determining the conformation of the 16S rRNA at the A site. This is Small ribosomal subunit protein uS14 from Clostridioides difficile (strain 630) (Peptoclostridium difficile).